The sequence spans 172 residues: Large ribosomal subunit protein uL5 (172 aa).

This sequence belongs to the universal ribosomal protein uL5 family. Component of the large ribosomal subunit.

It is found in the nucleus. The protein resides in the cytoplasm. Functionally, component of the ribosome, a large ribonucleoprotein complex responsible for the synthesis of proteins in the cell. The small ribosomal subunit (SSU) binds messenger RNAs (mRNAs) and translates the encoded message by selecting cognate aminoacyl-transfer RNA (tRNA) molecules. The large subunit (LSU) contains the ribosomal catalytic site termed the peptidyl transferase center (PTC), which catalyzes the formation of peptide bonds, thereby polymerizing the amino acids delivered by tRNAs into a polypeptide chain. The nascent polypeptides leave the ribosome through a tunnel in the LSU and interact with protein factors that function in enzymatic processing, targeting, and the membrane insertion of nascent chains at the exit of the ribosomal tunnel. The chain is Large ribosomal subunit protein uL5 (RPL11) from Tetrahymena thermophila.